Here is a 147-residue protein sequence, read N- to C-terminus: UPF0178 protein Nther_1836 (147 aa).

It belongs to the UPF0178 family.

The chain is UPF0178 protein Nther_1836 from Natranaerobius thermophilus (strain ATCC BAA-1301 / DSM 18059 / JW/NM-WN-LF).